The chain runs to 352 residues: Phosphoribosylformylglycinamidine cyclo-ligase (352 aa).

It belongs to the AIR synthase family.

Its subcellular location is the cytoplasm. The enzyme catalyses 2-formamido-N(1)-(5-O-phospho-beta-D-ribosyl)acetamidine + ATP = 5-amino-1-(5-phospho-beta-D-ribosyl)imidazole + ADP + phosphate + H(+). Its pathway is purine metabolism; IMP biosynthesis via de novo pathway; 5-amino-1-(5-phospho-D-ribosyl)imidazole from N(2)-formyl-N(1)-(5-phospho-D-ribosyl)glycinamide: step 2/2. This chain is Phosphoribosylformylglycinamidine cyclo-ligase, found in Teredinibacter turnerae (strain ATCC 39867 / T7901).